A 294-amino-acid polypeptide reads, in one-letter code: N-acetylmuramic acid 6-phosphate etherase (294 aa).

Residues 54-217 (VTKSFEEEGR…STASMIGVGK (164 aa)) enclose the SIS domain. Glu82 acts as the Proton donor in catalysis. Residue Glu113 is part of the active site.

This sequence belongs to the GCKR-like family. MurNAc-6-P etherase subfamily. In terms of assembly, homodimer.

The enzyme catalyses N-acetyl-D-muramate 6-phosphate + H2O = N-acetyl-D-glucosamine 6-phosphate + (R)-lactate. Its pathway is amino-sugar metabolism; N-acetylmuramate degradation. Functionally, specifically catalyzes the cleavage of the D-lactyl ether substituent of MurNAc 6-phosphate, producing GlcNAc 6-phosphate and D-lactate. In Bacillus mycoides (strain KBAB4) (Bacillus weihenstephanensis), this protein is N-acetylmuramic acid 6-phosphate etherase.